Consider the following 534-residue polypeptide: Arginine--tRNA ligase (534 aa).

A 'HIGH' region motif is present at residues 120 to 130 (ANPTGFLHLGH).

The protein belongs to the class-I aminoacyl-tRNA synthetase family. In terms of assembly, monomer.

Its subcellular location is the cytoplasm. It carries out the reaction tRNA(Arg) + L-arginine + ATP = L-arginyl-tRNA(Arg) + AMP + diphosphate. The polypeptide is Arginine--tRNA ligase (Mesomycoplasma hyopneumoniae (strain 7448) (Mycoplasma hyopneumoniae)).